We begin with the raw amino-acid sequence, 123 residues long: Small ribosomal subunit protein uS12 (123 aa).

Asp-89 is subject to 3-methylthioaspartic acid.

This sequence belongs to the universal ribosomal protein uS12 family. Part of the 30S ribosomal subunit. Contacts proteins S8 and S17. May interact with IF1 in the 30S initiation complex.

With S4 and S5 plays an important role in translational accuracy. In terms of biological role, interacts with and stabilizes bases of the 16S rRNA that are involved in tRNA selection in the A site and with the mRNA backbone. Located at the interface of the 30S and 50S subunits, it traverses the body of the 30S subunit contacting proteins on the other side and probably holding the rRNA structure together. The combined cluster of proteins S8, S12 and S17 appears to hold together the shoulder and platform of the 30S subunit. This chain is Small ribosomal subunit protein uS12, found in Chelativorans sp. (strain BNC1).